We begin with the raw amino-acid sequence, 1854 residues long: Protein virilizer (1854 aa).

Residue serine 186 is modified to Phosphoserine. Basic and acidic residues-rich tracts occupy residues 202–214 (YHQH…QREM) and 236–259 (THSE…DWSR). 5 disordered regions span residues 202-361 (YHQH…EIIG), 777-821 (NPEE…GKPV), 1570-1589 (TSTE…ASSC), 1720-1788 (VRGR…NRGS), and 1804-1854 (IGSP…SYLR). Serine 258, serine 260, and serine 276 each carry phosphoserine. A compositionally biased stretch (basic and acidic residues) spans 275 to 285 (RSRSVVDEHKW). Threonine 288 is modified (phosphothreonine). Serine 295 is subject to Phosphoserine. The residue at position 297 (threonine 297) is a Phosphothreonine. Serine 301 and serine 312 each carry phosphoserine. Composition is skewed to basic and acidic residues over residues 325–343 (HSSE…EDRS) and 777–796 (NPEE…KAME). Residues 779-808 (EEKEEKAEKSDAEDKAMEVENEAVEAGGEK) adopt a coiled-coil conformation. Low complexity-rich tracts occupy residues 1738–1748 (SRPPNTSRPPS) and 1816–1838 (SYRS…PHYS).

The protein belongs to the vir family. In terms of assembly, component of the WMM complex, a N6-methyltransferase complex composed of a catalytic subcomplex, named MAC, and of an associated subcomplex, named MACOM. The MAC subcomplex is composed of Ime4/Mettl3 and Mettl14. The MACOM subcomplex is composed of fl(2)d, Flacc/Xio, Hakai, vir, and, in some cases of nito. Part of a complex containing fl(2)d, Sxl and vir.

It localises to the nucleus. Functionally, associated component of the WMM complex, a complex that mediates N6-methyladenosine (m6A) methylation of mRNAs, a modification that plays a role in the efficiency of mRNA splicing and is required for sex determination. Required for sex determination and dosage compensation via Sxl alternative splicing: m6A methylation acts as a key regulator of Sxl pre-mRNA and promotes female-specific alternative splicing of Sxl, which determines female physiognomy. M6A methylation is also required for neuronal functions. Required for proper inclusion of regulated exons in Ubx transcripts, leading to isoforms Ia/b and IIa/b. The protein is Protein virilizer of Drosophila melanogaster (Fruit fly).